A 263-amino-acid polypeptide reads, in one-letter code: Trans-aconitate 2-methyltransferase (263 aa).

It belongs to the methyltransferase superfamily. Tam family.

It is found in the cytoplasm. The enzyme catalyses trans-aconitate + S-adenosyl-L-methionine = (E)-3-(methoxycarbonyl)pent-2-enedioate + S-adenosyl-L-homocysteine. Catalyzes the S-adenosylmethionine monomethyl esterification of trans-aconitate. The chain is Trans-aconitate 2-methyltransferase from Mycobacterium ulcerans (strain Agy99).